Here is a 128-residue protein sequence, read N- to C-terminus: Fluoride-specific ion channel FluC (128 aa).

4 helical membrane passes run 8 to 28, 38 to 58, 71 to 91, and 103 to 123; these read IIFI…LGLL, LGTL…LAFF, FFVT…AEVI, and LMLA…GVFI. Positions 78 and 81 each coordinate Na(+).

It belongs to the fluoride channel Fluc/FEX (TC 1.A.43) family.

It localises to the cell inner membrane. The enzyme catalyses fluoride(in) = fluoride(out). Its activity is regulated as follows. Na(+) is not transported, but it plays an essential structural role and its presence is essential for fluoride channel function. Its function is as follows. Fluoride-specific ion channel. Important for reducing fluoride concentration in the cell, thus reducing its toxicity. The sequence is that of Fluoride-specific ion channel FluC from Pasteurella multocida (strain Pm70).